Here is a 331-residue protein sequence, read N- to C-terminus: D-galactose/methyl-galactoside binding periplasmic protein MglB (331 aa).

The N-terminal stretch at Met-1–Ala-24 is a signal peptide. Positions 38 and 115 each coordinate beta-D-galactose. Beta-D-glucose is bound by residues Asp-38 and Asn-115. Residues Asp-158, Asn-160, Asp-162, Lys-164, and Gln-166 each coordinate Ca(2+). The beta-D-galactose site is built by His-176, Asp-178, and Arg-182. Residues His-176, Asp-178, and Arg-182 each contribute to the beta-D-glucose site. Glu-229 contributes to the Ca(2+) binding site. Beta-D-galactose is bound by residues Asn-235, Asp-259, and Asn-279. Asn-235, Asp-259, and Asn-279 together coordinate beta-D-glucose.

It belongs to the bacterial solute-binding protein 2 family. As to quaternary structure, the ABC transporter complex is composed of one ATP-binding protein (MglA), two transmembrane proteins (MglC) and a solute-binding protein (MglB).

The protein localises to the periplasm. Part of the ABC transporter complex MglABC involved in galactose/methyl galactoside import. The chain is D-galactose/methyl-galactoside binding periplasmic protein MglB (mglB) from Haemophilus influenzae (strain ATCC 51907 / DSM 11121 / KW20 / Rd).